Here is a 775-residue protein sequence, read N- to C-terminus: Phosphoribosylformylglycinamidine synthase subunit PurL (775 aa).

Histidine 81 is an active-site residue. ATP is bound by residues tyrosine 84 and lysine 123. Glutamate 125 lines the Mg(2+) pocket. Residues 126–129 (SHNH) and arginine 148 contribute to the substrate site. Histidine 127 serves as the catalytic Proton acceptor. Aspartate 149 is a binding site for Mg(2+). Glutamine 272 serves as a coordination point for substrate. Aspartate 300 is a binding site for Mg(2+). Position 344-346 (344-346 (ESQ)) interacts with substrate. Residues aspartate 525 and glycine 562 each coordinate ATP. Residue asparagine 563 coordinates Mg(2+). Residue serine 565 participates in substrate binding.

Belongs to the FGAMS family. In terms of assembly, monomer. Part of the FGAM synthase complex composed of 1 PurL, 1 PurQ and 2 PurS subunits.

Its subcellular location is the cytoplasm. It catalyses the reaction N(2)-formyl-N(1)-(5-phospho-beta-D-ribosyl)glycinamide + L-glutamine + ATP + H2O = 2-formamido-N(1)-(5-O-phospho-beta-D-ribosyl)acetamidine + L-glutamate + ADP + phosphate + H(+). It functions in the pathway purine metabolism; IMP biosynthesis via de novo pathway; 5-amino-1-(5-phospho-D-ribosyl)imidazole from N(2)-formyl-N(1)-(5-phospho-D-ribosyl)glycinamide: step 1/2. Its function is as follows. Part of the phosphoribosylformylglycinamidine synthase complex involved in the purines biosynthetic pathway. Catalyzes the ATP-dependent conversion of formylglycinamide ribonucleotide (FGAR) and glutamine to yield formylglycinamidine ribonucleotide (FGAM) and glutamate. The FGAM synthase complex is composed of three subunits. PurQ produces an ammonia molecule by converting glutamine to glutamate. PurL transfers the ammonia molecule to FGAR to form FGAM in an ATP-dependent manner. PurS interacts with PurQ and PurL and is thought to assist in the transfer of the ammonia molecule from PurQ to PurL. This Agrobacterium fabrum (strain C58 / ATCC 33970) (Agrobacterium tumefaciens (strain C58)) protein is Phosphoribosylformylglycinamidine synthase subunit PurL.